The sequence spans 112 residues: uncharacterized protein (112 aa).

The next 2 helical transmembrane spans lie at 55–75 (LLEI…PTLF) and 91–111 (LIML…LLLL).

It is found in the membrane. This is an uncharacterized protein from Saccharomyces cerevisiae (strain ATCC 204508 / S288c) (Baker's yeast).